Here is a 430-residue protein sequence, read N- to C-terminus: Long-chain specific acyl-CoA dehydrogenase, mitochondrial (430 aa).

A mitochondrion-targeting transit peptide spans 1-30 (MAARLLLRSLRVLSARSATLPPPSARCSHS). N6-acetyllysine is present on K42. S54 and S55 each carry phosphoserine. Residues K66 and K81 each carry the N6-acetyllysine; alternate modification. 2 positions are modified to N6-succinyllysine; alternate: K66 and K81. N6-acetyllysine occurs at positions 92 and 95. K165 carries the N6-succinyllysine modification. 170–179 (IAMTEPGAGS) provides a ligand contact to FAD. Position 179 (S179) interacts with substrate. The residue at position 191 (S191) is a Phosphoserine. FAD is bound at residue 203–205 (FIT). 227–228 (AH) provides a ligand contact to substrate. K240 is subject to N6-succinyllysine. K254 and K279 each carry N6-acetyllysine; alternate. An N6-succinyllysine; alternate mark is found at K254 and K279. Residues Y282 and 289–292 (PQER) contribute to the substrate site. Catalysis depends on E291, which acts as the Proton acceptor. R317 is an FAD binding site. K318 carries the post-translational modification N6-acetyllysine. K322 carries the N6-acetyllysine; alternate modification. N6-succinyllysine; alternate is present on K322. Residue Q328 participates in FAD binding. K358 carries the post-translational modification N6-acetyllysine. S362 bears the Phosphoserine mark. 385–389 (QLHGG) serves as a coordination point for FAD. Position 412-413 (412-413 (GG)) interacts with substrate. An FAD-binding site is contributed by 414–416 (TNE).

The protein belongs to the acyl-CoA dehydrogenase family. Homotetramer. FAD is required as a cofactor. In terms of processing, acetylation at Lys-318 and Lys-322 in proximity of the cofactor-binding sites strongly reduces catalytic activity. These sites are deacetylated by SIRT3.

It localises to the mitochondrion matrix. The catalysed reaction is a long-chain 2,3-saturated fatty acyl-CoA + oxidized [electron-transfer flavoprotein] + H(+) = a long-chain (2E)-enoyl-CoA + reduced [electron-transfer flavoprotein]. It carries out the reaction octanoyl-CoA + oxidized [electron-transfer flavoprotein] + H(+) = (2E)-octenoyl-CoA + reduced [electron-transfer flavoprotein]. It catalyses the reaction decanoyl-CoA + oxidized [electron-transfer flavoprotein] + H(+) = (2E)-decenoyl-CoA + reduced [electron-transfer flavoprotein]. The enzyme catalyses dodecanoyl-CoA + oxidized [electron-transfer flavoprotein] + H(+) = (2E)-dodecenoyl-CoA + reduced [electron-transfer flavoprotein]. The catalysed reaction is tetradecanoyl-CoA + oxidized [electron-transfer flavoprotein] + H(+) = (2E)-tetradecenoyl-CoA + reduced [electron-transfer flavoprotein]. It carries out the reaction oxidized [electron-transfer flavoprotein] + hexadecanoyl-CoA + H(+) = (2E)-hexadecenoyl-CoA + reduced [electron-transfer flavoprotein]. It catalyses the reaction octadecanoyl-CoA + oxidized [electron-transfer flavoprotein] + H(+) = (2E)-octadecenoyl-CoA + reduced [electron-transfer flavoprotein]. The enzyme catalyses (5E)-tetradecenoyl-CoA + oxidized [electron-transfer flavoprotein] + H(+) = (2E,5E)-tetradecadienoyl-CoA + reduced [electron-transfer flavoprotein]. The catalysed reaction is (5Z)-tetradecenoyl-CoA + oxidized [electron-transfer flavoprotein] + H(+) = (2E,5Z)-tetradecadienoyl-CoA + reduced [electron-transfer flavoprotein]. It carries out the reaction oxidized [electron-transfer flavoprotein] + (9Z)-octadecenoyl-CoA + H(+) = (2E,9Z)-octadecadienoyl-CoA + reduced [electron-transfer flavoprotein]. It catalyses the reaction hexanoyl-CoA + oxidized [electron-transfer flavoprotein] + H(+) = (2E)-hexenoyl-CoA + reduced [electron-transfer flavoprotein]. The enzyme catalyses eicosanoyl-CoA + oxidized [electron-transfer flavoprotein] + H(+) = (2E)-eicosenoyl-CoA + reduced [electron-transfer flavoprotein]. The catalysed reaction is docosanoyl-CoA + oxidized [electron-transfer flavoprotein] + H(+) = (2E)-docosenoyl-CoA + reduced [electron-transfer flavoprotein]. It carries out the reaction tetracosanoyl-CoA + oxidized [electron-transfer flavoprotein] + H(+) = (2E)-tetracosenoyl-CoA + reduced [electron-transfer flavoprotein]. Its pathway is lipid metabolism; mitochondrial fatty acid beta-oxidation. With respect to regulation, inhibited by crotonyl-CoA, 2-octenoyl-CoA and 2-hexadecenoyl-CoA. Its function is as follows. Long-chain specific acyl-CoA dehydrogenase is one of the acyl-CoA dehydrogenases that catalyze the first step of mitochondrial fatty acid beta-oxidation, an aerobic process breaking down fatty acids into acetyl-CoA and allowing the production of energy from fats. The first step of fatty acid beta-oxidation consists in the removal of one hydrogen from C-2 and C-3 of the straight-chain fatty acyl-CoA thioester, resulting in the formation of trans-2-enoyl-CoA. Among the different mitochondrial acyl-CoA dehydrogenases, long-chain specific acyl-CoA dehydrogenase can act on saturated and unsaturated acyl-CoAs with 6 to 24 carbons with a preference for 8 to 18 carbons long primary chains. The chain is Long-chain specific acyl-CoA dehydrogenase, mitochondrial from Rattus norvegicus (Rat).